A 216-amino-acid polypeptide reads, in one-letter code: Cytochrome c oxidase subunit 2 (216 aa).

Topologically, residues 1-8 are mitochondrial intermembrane; sequence LGLQNATS. The helical transmembrane segment at 9–39 threads the bilayer; sequence PIMEELIAFHDHALMIIFLISSLVLYIISLM. The Mitochondrial matrix segment spans residues 40–53; the sequence is LTTKLTHTSTMNAQ. The helical transmembrane segment at 54-81 threads the bilayer; the sequence is EIEMIWTILPAVILIMIALPSLRILYMT. Residues 82–216 lie on the Mitochondrial intermembrane side of the membrane; sequence DEFNKPYLTL…FIYFQDFEVW (135 aa). His155, Cys190, Glu192, Cys194, His198, and Met201 together coordinate Cu cation. Glu192 serves as a coordination point for Mg(2+).

The protein belongs to the cytochrome c oxidase subunit 2 family. In terms of assembly, component of the cytochrome c oxidase (complex IV, CIV), a multisubunit enzyme composed of 14 subunits. The complex is composed of a catalytic core of 3 subunits MT-CO1, MT-CO2 and MT-CO3, encoded in the mitochondrial DNA, and 11 supernumerary subunits COX4I, COX5A, COX5B, COX6A, COX6B, COX6C, COX7A, COX7B, COX7C, COX8 and NDUFA4, which are encoded in the nuclear genome. The complex exists as a monomer or a dimer and forms supercomplexes (SCs) in the inner mitochondrial membrane with NADH-ubiquinone oxidoreductase (complex I, CI) and ubiquinol-cytochrome c oxidoreductase (cytochrome b-c1 complex, complex III, CIII), resulting in different assemblies (supercomplex SCI(1)III(2)IV(1) and megacomplex MCI(2)III(2)IV(2)). Found in a complex with TMEM177, COA6, COX18, COX20, SCO1 and SCO2. Interacts with TMEM177 in a COX20-dependent manner. Interacts with COX20. Interacts with COX16. It depends on Cu cation as a cofactor.

It localises to the mitochondrion inner membrane. It carries out the reaction 4 Fe(II)-[cytochrome c] + O2 + 8 H(+)(in) = 4 Fe(III)-[cytochrome c] + 2 H2O + 4 H(+)(out). Component of the cytochrome c oxidase, the last enzyme in the mitochondrial electron transport chain which drives oxidative phosphorylation. The respiratory chain contains 3 multisubunit complexes succinate dehydrogenase (complex II, CII), ubiquinol-cytochrome c oxidoreductase (cytochrome b-c1 complex, complex III, CIII) and cytochrome c oxidase (complex IV, CIV), that cooperate to transfer electrons derived from NADH and succinate to molecular oxygen, creating an electrochemical gradient over the inner membrane that drives transmembrane transport and the ATP synthase. Cytochrome c oxidase is the component of the respiratory chain that catalyzes the reduction of oxygen to water. Electrons originating from reduced cytochrome c in the intermembrane space (IMS) are transferred via the dinuclear copper A center (CU(A)) of subunit 2 and heme A of subunit 1 to the active site in subunit 1, a binuclear center (BNC) formed by heme A3 and copper B (CU(B)). The BNC reduces molecular oxygen to 2 water molecules using 4 electrons from cytochrome c in the IMS and 4 protons from the mitochondrial matrix. In Callimico goeldii (Goeldi's marmoset), this protein is Cytochrome c oxidase subunit 2 (MT-CO2).